The primary structure comprises 458 residues: MAIATIDPTTGITLKTFDAHTPEEVENRIARAEAAFRSLQNTSFEERARWMHKAADILESEADEVARLIATEMGKTLTTAKYEALKSATGMRHFADHAQRYLSPETPVPASEVNASNLHVQFDPLGVVLAVMPWNYPLWQAVRFAAPALMAGNTGLLKHASNVPQCALYLGDLFARGGFPEGAFQTLLVEGKDVIPLVDDARIRAVTLTGSVAAGSAIAEAAGRNIKRSVLELGGMDVFIVMPSADIEKAAAQAVIARLQNSGQSCIAAKRFYVHEDVYDRFEHLFVTGMAEAVAGDPLDESTSFGPLATERGRQDVHELVRDAREKGAAVQCGGEIPEGEGWYYPATVLTGVTEDMRIYREECFGPVACLYKVSSLQEAIALSNDSDFGLSSSVWTNDETEATEAARSIEAGGVFINGLTASFPAVPFGGLKDSGYGRELSAYGIREFVNIKTVWTS.

NADP(+)-binding positions include 134–135 (WN), 158–161 (KHAS), and 210–211 (GS). Glutamate 232 (proton acceptor) is an active-site residue. An NADP(+)-binding site is contributed by leucine 233. Residue cysteine 266 is the Nucleophile of the active site. Glutamate 363 is an NADP(+) binding site.

Belongs to the aldehyde dehydrogenase family. In terms of assembly, monomer.

The enzyme catalyses an aldehyde + NAD(+) + H2O = a carboxylate + NADH + 2 H(+). The catalysed reaction is an aldehyde + NADP(+) + H2O = a carboxylate + NADPH + 2 H(+). The protein operates within carbohydrate metabolism; D-xylose degradation. In terms of biological role, aldehyde dehydrogenase able to oxidize various aldehydes such as formaldehyde, glyceraldehyde, butyraldehyde, glutaraldehyde and benzaldehyde (in vitro). Is likely involved in the oxidative D-xylose degradation pathway, catalyzing the oxidation step of 2-oxoglutarate semialdehyde to 2-oxoglutarate. Is able to use both NAD(+) and NADP(+); however, shows a preference for NADP(+). Does not display succinate semialdehyde dehydrogenase activity. In Paenarthrobacter nicotinovorans (Arthrobacter nicotinovorans), this protein is Aldehyde dehydrogenase (aldh).